Reading from the N-terminus, the 77-residue chain is uncharacterized protein (77 aa).

The 77-residue stretch at 1 to 77 (MAFERQGKIE…VAILDGKLVW (77 aa)) folds into the Peptidase A1 domain.

This is an uncharacterized protein from Saccharomyces cerevisiae (strain ATCC 204508 / S288c) (Baker's yeast).